The primary structure comprises 375 residues: MKIWLLLGLLLMHEALEDVTGQHPPKNKRPKEPGENRIKPTNKKVKPKIPKIKDRDSADPTPKTQSIMTQMMDKGRFQKPAATLSLVAGQTLELRCKGNKIGWSYPAYLDTFKDTRLSVKQHERYGQLTLVNSTAADTGEFSCWGQLCTGYVCRRDEAKTGSTYIFFTEKGELFVPSPSHFDVVYLNPDRQAVVPCRVTVLSAKVTLHREFPAKEIPANGTDIVYDLKRGFVYLQPHVGHQGVVYCKAEAGGKSQISVKYQLLYAEVPRGPPSTTILASSNKVKGGDDVSVLCTVLGEPDVEVEFRWTYPGQKDERPVTIQDSWRLIHRGLGHTTRISQSVLSIEDFETIDAGYYICTAQNLQGQTTVATTVESS.

Residues 1-21 form the signal peptide; sequence MKIWLLLGLLLMHEALEDVTG. Residues 20 to 64 are disordered; it reads TGQHPPKNKRPKEPGENRIKPTNKKVKPKIPKIKDRDSADPTPKT. The span at 40–50 shows a compositional bias: basic residues; that stretch reads PTNKKVKPKIP. Residues 62-159 form the Ig-like C2-type 1 domain; it reads PKTQSIMTQM…GYVCRRDEAK (98 aa). Cysteines 96 and 143 form a disulfide. 2 N-linked (GlcNAc...) asparagine glycosylation sites follow: asparagine 132 and asparagine 219. The Ig-like C2-type 2 domain occupies 272–373; that stretch reads PSTTILASSN…GQTTVATTVE (102 aa). Cysteine 293 and cysteine 357 form a disulfide bridge.

As to quaternary structure, forms a complex composed of PDGFRL, TNK2 and GRB2.

It is found in the secreted. This is Platelet-derived growth factor receptor-like protein (PDGFRL) from Bos taurus (Bovine).